The sequence spans 435 residues: Glutamate-1-semialdehyde 2,1-aminomutase (435 aa).

Lys-266 carries the post-translational modification N6-(pyridoxal phosphate)lysine.

It belongs to the class-III pyridoxal-phosphate-dependent aminotransferase family. HemL subfamily. Homodimer. Pyridoxal 5'-phosphate is required as a cofactor.

It localises to the cytoplasm. The enzyme catalyses (S)-4-amino-5-oxopentanoate = 5-aminolevulinate. Its pathway is porphyrin-containing compound metabolism; protoporphyrin-IX biosynthesis; 5-aminolevulinate from L-glutamyl-tRNA(Glu): step 2/2. The polypeptide is Glutamate-1-semialdehyde 2,1-aminomutase (Coxiella burnetii (strain CbuK_Q154) (Coxiella burnetii (strain Q154))).